The sequence spans 234 residues: Sugar fermentation stimulation protein homolog (234 aa).

This sequence belongs to the SfsA family.

The sequence is that of Sugar fermentation stimulation protein homolog from Shewanella pealeana (strain ATCC 700345 / ANG-SQ1).